The primary structure comprises 391 residues: Inhibin beta B chain (391 aa).

The N-terminal stretch at 1–25 (MDGAARRGVLAALLACGLLLLGAAA) is a signal peptide. A propeptide spanning residues 26–276 (TPTPPPAGSS…ADNKHRIRKR (251 aa)) is cleaved from the precursor. Residues 27 to 47 (PTPPPAGSSPQDTCTSCGFRR) form a disordered region. N-linked (GlcNAc...) asparagine glycosylation occurs at Asn-77. 4 cysteine pairs are disulfide-bonded: Cys-280–Cys-288, Cys-287–Cys-356, Cys-316–Cys-388, and Cys-320–Cys-390.

The protein belongs to the TGF-beta family. As to quaternary structure, dimeric, linked by one or more disulfide bonds. Inhibin A is a dimer of alpha and beta-A. Inhibin B is a dimer of alpha and beta-B. Activin A is a homodimer of beta-A. Activin B is a homodimer of beta-B. Activin AB is a dimer of beta-A and beta-B.

The protein resides in the secreted. Inhibins and activins inhibit and activate, respectively, the secretion of follitropin by the pituitary gland. Inhibins/activins are involved in regulating a number of diverse functions such as hypothalamic and pituitary hormone secretion, gonadal hormone secretion, germ cell development and maturation, erythroid differentiation, insulin secretion, nerve cell survival, embryonic axial development or bone growth, depending on their subunit composition. Inhibins appear to oppose the functions of activins. This chain is Inhibin beta B chain (INHBB), found in Gallus gallus (Chicken).